Consider the following 184-residue polypeptide: ATP synthase subunit b (184 aa).

Residues 15 to 34 traverse the membrane as a helical segment; it reads VQPGLIFWTLVTFVIAAVVL.

Belongs to the ATPase B chain family. F-type ATPases have 2 components, F(1) - the catalytic core - and F(0) - the membrane proton channel. F(1) has five subunits: alpha(3), beta(3), gamma(1), delta(1), epsilon(1). F(0) has three main subunits: a(1), b(2) and c(10-14). The alpha and beta chains form an alternating ring which encloses part of the gamma chain. F(1) is attached to F(0) by a central stalk formed by the gamma and epsilon chains, while a peripheral stalk is formed by the delta and b chains.

It is found in the cell inner membrane. Its function is as follows. F(1)F(0) ATP synthase produces ATP from ADP in the presence of a proton or sodium gradient. F-type ATPases consist of two structural domains, F(1) containing the extramembraneous catalytic core and F(0) containing the membrane proton channel, linked together by a central stalk and a peripheral stalk. During catalysis, ATP synthesis in the catalytic domain of F(1) is coupled via a rotary mechanism of the central stalk subunits to proton translocation. Component of the F(0) channel, it forms part of the peripheral stalk, linking F(1) to F(0). This is ATP synthase subunit b from Myxococcus xanthus (strain DK1622).